A 332-amino-acid chain; its full sequence is Eukaryotic translation initiation factor 3 subunit H (332 aa).

One can recognise an MPN domain in the interval 18-153 (VQVDGLTVLK…LKAFRLSDEM (136 aa)). The segment at 251–285 (QQQKENYLQRRQQENQSRIQRGEDPLPDEDLSKMF) is disordered.

The protein belongs to the eIF-3 subunit H family. As to quaternary structure, component of the eukaryotic translation initiation factor 3 (eIF-3) complex.

It localises to the cytoplasm. Functionally, component of the eukaryotic translation initiation factor 3 (eIF-3) complex, which is involved in protein synthesis of a specialized repertoire of mRNAs and, together with other initiation factors, stimulates binding of mRNA and methionyl-tRNAi to the 40S ribosome. The eIF-3 complex specifically targets and initiates translation of a subset of mRNAs involved in cell proliferation. The sequence is that of Eukaryotic translation initiation factor 3 subunit H from Nematostella vectensis (Starlet sea anemone).